Consider the following 537-residue polypeptide: 5,6-dihydroxyindole-2-carboxylic acid oxidase (537 aa).

A signal peptide spans 1–24 (MKSPTLLSLGYMFLVLLFFQQAWA). The Lumenal, melanosome segment spans residues 25 to 477 (QFPRECATIE…WPSRSFSISE (453 aa)). 5 cysteine pairs are disulfide-bonded: cysteine 30-cysteine 41, cysteine 42-cysteine 65, cysteine 56-cysteine 99, cysteine 101-cysteine 110, and cysteine 113-cysteine 122. Asparagine 96 and asparagine 104 each carry an N-linked (GlcNAc...) asparagine glycan. Asparagine 181 carries N-linked (GlcNAc...) asparagine glycosylation. Residues histidine 192, histidine 215, and histidine 224 each coordinate Zn(2+). 2 cysteine pairs are disulfide-bonded: cysteine 258–cysteine 261 and cysteine 290–cysteine 303. Residues asparagine 304 and asparagine 350 are each glycosylated (N-linked (GlcNAc...) asparagine). Residues histidine 377 and histidine 381 each contribute to the Zn(2+) site. The N-linked (GlcNAc...) asparagine glycan is linked to asparagine 385. Histidine 404 is a binding site for Zn(2+). Residues 478–501 (IVTIAVVAALSLVAVIFAGASCLI) form a helical membrane-spanning segment. Topologically, residues 502 to 537 (RARSNMDEANQPLLTDQYQHYIEEYEKIHNPNQSVV) are cytoplasmic.

Belongs to the tyrosinase family. As to quaternary structure, monomer. Interacts with ATP7A. Interacts with SLC45A2. It depends on Cu(2+) as a cofactor. The cofactor is Zn(2+). Post-translationally, glycosylated.

The protein resides in the melanosome membrane. It carries out the reaction 2 5,6-dihydroxyindole-2-carboxylate + O2 = 2 indole-5,6-quinone-2-carboxylate + 2 H2O. The protein operates within pigment biosynthesis; melanin biosynthesis. In terms of biological role, plays a role in melanin biosynthesis. Catalyzes the oxidation of 5,6-dihydroxyindole-2-carboxylic acid (DHICA) into indole-5,6-quinone-2-carboxylic acid. May regulate or influence the type of melanin synthesized. Also to a lower extent, capable of hydroxylating tyrosine and producing melanin. The protein is 5,6-dihydroxyindole-2-carboxylic acid oxidase (TYRP1) of Bos taurus (Bovine).